A 226-amino-acid chain; its full sequence is UPF0758 protein Daci_1904 (226 aa).

Residues 104–226 enclose the MPN domain; sequence ALASPEAVAR…SLSMAGQGML (123 aa). Residues histidine 175, histidine 177, and aspartate 188 each contribute to the Zn(2+) site. Positions 175–188 match the JAMM motif motif; the sequence is HNHPSGQVQASAAD.

This sequence belongs to the UPF0758 family.

The polypeptide is UPF0758 protein Daci_1904 (Delftia acidovorans (strain DSM 14801 / SPH-1)).